The sequence spans 208 residues: NAD(P)H-hydrate epimerase (208 aa).

In terms of domain architecture, YjeF N-terminal spans 11-208 (MRAKDQFTIN…VIVADDMGTY (198 aa)). 59–63 (NNGGD) serves as a coordination point for (6S)-NADPHX. 2 residues coordinate K(+): asparagine 60 and aspartate 122. Residues 126-132 (GIGIDRP), tyrosine 137, and aspartate 155 contribute to the (6S)-NADPHX site. K(+) is bound at residue serine 158.

It belongs to the NnrE/AIBP family. The cofactor is K(+).

The enzyme catalyses (6R)-NADHX = (6S)-NADHX. It carries out the reaction (6R)-NADPHX = (6S)-NADPHX. Functionally, catalyzes the epimerization of the S- and R-forms of NAD(P)HX, a damaged form of NAD(P)H that is a result of enzymatic or heat-dependent hydration. This is a prerequisite for the S-specific NAD(P)H-hydrate dehydratase to allow the repair of both epimers of NAD(P)HX. The polypeptide is NAD(P)H-hydrate epimerase (Limosilactobacillus fermentum (strain NBRC 3956 / LMG 18251) (Lactobacillus fermentum)).